The primary structure comprises 494 residues: ATP synthase subunit beta, plastid (494 aa).

G169–T176 contacts ATP.

Belongs to the ATPase alpha/beta chains family. As to quaternary structure, F-type ATPases have 2 components, CF(1) - the catalytic core - and CF(0) - the membrane proton channel. CF(1) has five subunits: alpha(3), beta(3), gamma(1), delta(1), epsilon(1). CF(0) has four main subunits: a(1), b(1), b'(1) and c(9-12).

The protein localises to the plastid membrane. The enzyme catalyses ATP + H2O + 4 H(+)(in) = ADP + phosphate + 5 H(+)(out). Its function is as follows. Produces ATP from ADP in the presence of a proton gradient across the membrane. The catalytic sites are hosted primarily by the beta subunits. The protein is ATP synthase subunit beta, plastid (atpB) of Cuscuta sandwichiana (Kauna'oa).